A 96-amino-acid chain; its full sequence is uncharacterized protein (96 aa).

The helical transmembrane segment at 53 to 71 threads the bilayer; sequence VLLMPLLQSFVLSLALMGV.

It localises to the membrane. This is an uncharacterized protein from Saccharomyces cerevisiae (strain ATCC 204508 / S288c) (Baker's yeast).